The chain runs to 360 residues: Phospho-N-acetylmuramoyl-pentapeptide-transferase (360 aa).

The Periplasmic portion of the chain corresponds to 1–25; the sequence is MLVWLAEHLVKYYSGFNVFSYLTFR. Residues 26-46 form a helical membrane-spanning segment; sequence AIVSLLTALFISLWMGPRMIA. The Cytoplasmic segment spans residues 47-71; sequence HLQKLSFGQVVRNDGPESHFSKRGT. A helical transmembrane segment spans residues 72–92; the sequence is PTMGGIMILTAIVISVLLWAY. A topological domain (periplasmic) is located at residue Pro93. A helical membrane pass occupies residues 94 to 114; it reads SNPYVWCVLVVLVGYGIIGFV. The Cytoplasmic segment spans residues 115 to 131; the sequence is DDYRKVVRKDTKGLIAR. Residues 132–152 traverse the membrane as a helical segment; the sequence is WKYFWMSVIALGVAFALYLAG. At 153 to 167 the chain is on the periplasmic side; the sequence is KDTPATQLVVPFFKD. A helical membrane pass occupies residues 168 to 188; the sequence is VMPQLGLFYILLAYFVIVGTG. At 189 to 198 the chain is on the cytoplasmic side; that stretch reads NAVNLTDGLD. A helical membrane pass occupies residues 199-219; sequence GLAIMPTVFVAGGFALVAWAT. Topologically, residues 220-235 are periplasmic; sequence GNMNFASYLHIPYLRH. A helical transmembrane segment spans residues 236-256; the sequence is AGELVIVCTAIVGAGLGFLWF. Over 257 to 262 the chain is Cytoplasmic; that stretch reads NTYPAQ. The helical transmembrane segment at 263-283 threads the bilayer; the sequence is VFMGDVGSLALGGALGIIAVL. The Periplasmic portion of the chain corresponds to 284–287; that stretch reads LRQE. Residues 288-308 form a helical membrane-spanning segment; that stretch reads FLLVIMGGVFVVETLSVILQV. Residues 309-337 lie on the Cytoplasmic side of the membrane; it reads GSFKLRGQRIFRMAPIHHHYELKGWPEPR. A helical transmembrane segment spans residues 338 to 358; it reads VIVRFWIISLMLVLIGLATLK. Residues 359 to 360 are Periplasmic-facing; the sequence is VR.

This sequence belongs to the glycosyltransferase 4 family. MraY subfamily. Mg(2+) is required as a cofactor.

It is found in the cell inner membrane. It catalyses the reaction UDP-N-acetyl-alpha-D-muramoyl-L-alanyl-gamma-D-glutamyl-meso-2,6-diaminopimeloyl-D-alanyl-D-alanine + di-trans,octa-cis-undecaprenyl phosphate = di-trans,octa-cis-undecaprenyl diphospho-N-acetyl-alpha-D-muramoyl-L-alanyl-D-glutamyl-meso-2,6-diaminopimeloyl-D-alanyl-D-alanine + UMP. Its pathway is cell wall biogenesis; peptidoglycan biosynthesis. Functionally, catalyzes the initial step of the lipid cycle reactions in the biosynthesis of the cell wall peptidoglycan: transfers peptidoglycan precursor phospho-MurNAc-pentapeptide from UDP-MurNAc-pentapeptide onto the lipid carrier undecaprenyl phosphate, yielding undecaprenyl-pyrophosphoryl-MurNAc-pentapeptide, known as lipid I. The polypeptide is Phospho-N-acetylmuramoyl-pentapeptide-transferase (Escherichia coli O7:K1 (strain IAI39 / ExPEC)).